A 135-amino-acid polypeptide reads, in one-letter code: Glutaredoxin-C3 (135 aa).

Positions 26-134 (VARVERLASE…PLLKEAGALW (109 aa)) constitute a Glutaredoxin domain. Cysteines 46 and 49 form a disulfide. The short motif at 132–135 (ALWL) is the Responsive for interaction with TGA factors element.

Belongs to the glutaredoxin family. CC-type subfamily.

The protein resides in the cytoplasm. It is found in the nucleus. In terms of biological role, has a glutathione-disulfide oxidoreductase activity in the presence of NADPH and glutathione reductase. Reduces low molecular weight disulfides and proteins. In Oryza sativa subsp. japonica (Rice), this protein is Glutaredoxin-C3 (GRXC3).